A 426-amino-acid chain; its full sequence is Formate-dependent phosphoribosylglycinamide formyltransferase (426 aa).

N(1)-(5-phospho-beta-D-ribosyl)glycinamide is bound by residues 26-27 (EL) and Glu86. Residues Arg118, Lys158, 197–200 (EEFI), and Glu205 each bind ATP. The ATP-grasp domain occupies 123–324 (EAIASTGART…EFALHAKAVL (202 aa)). Residues Glu279 and Glu293 each coordinate Mg(2+). N(1)-(5-phospho-beta-D-ribosyl)glycinamide is bound by residues Asp300, Lys374, and 381 to 382 (RR).

This sequence belongs to the PurK/PurT family. As to quaternary structure, homodimer.

It carries out the reaction N(1)-(5-phospho-beta-D-ribosyl)glycinamide + formate + ATP = N(2)-formyl-N(1)-(5-phospho-beta-D-ribosyl)glycinamide + ADP + phosphate + H(+). It participates in purine metabolism; IMP biosynthesis via de novo pathway; N(2)-formyl-N(1)-(5-phospho-D-ribosyl)glycinamide from N(1)-(5-phospho-D-ribosyl)glycinamide (formate route): step 1/1. Functionally, involved in the de novo purine biosynthesis. Catalyzes the transfer of formate to 5-phospho-ribosyl-glycinamide (GAR), producing 5-phospho-ribosyl-N-formylglycinamide (FGAR). Formate is provided by PurU via hydrolysis of 10-formyl-tetrahydrofolate. In Methanocella arvoryzae (strain DSM 22066 / NBRC 105507 / MRE50), this protein is Formate-dependent phosphoribosylglycinamide formyltransferase.